Consider the following 305-residue polypeptide: Methionyl-tRNA formyltransferase (305 aa).

111 to 114 serves as a coordination point for (6S)-5,6,7,8-tetrahydrofolate; the sequence is SLLP.

Belongs to the Fmt family.

The catalysed reaction is L-methionyl-tRNA(fMet) + (6R)-10-formyltetrahydrofolate = N-formyl-L-methionyl-tRNA(fMet) + (6S)-5,6,7,8-tetrahydrofolate + H(+). Functionally, attaches a formyl group to the free amino group of methionyl-tRNA(fMet). The formyl group appears to play a dual role in the initiator identity of N-formylmethionyl-tRNA by promoting its recognition by IF2 and preventing the misappropriation of this tRNA by the elongation apparatus. The protein is Methionyl-tRNA formyltransferase of Campylobacter jejuni subsp. jejuni serotype O:2 (strain ATCC 700819 / NCTC 11168).